Here is a 252-residue protein sequence, read N- to C-terminus: MKFTIIIPARYASTRLPRKPLLDILGKPMIQHVWERAKQAGGHRVIIATDHSEIAEVVTRFGGEVCLTSDKHSSGTERLAEVVSKMNISDDEIIVNVQGDEPLIPPCIIKQVAENLDNHQVNMATLAVKLTQRDELFNPNVVKVLSDKNGMALYFSRAAIPFARDNFPDCSDDFVTQNQYLRHIGIYAYRAGFIKQYVQWQPTALEQLESLEQLRALWNGEKIHLDIALETPEVGVDTQEDLERVRLILSNK.

Belongs to the KdsB family.

It is found in the cytoplasm. The catalysed reaction is 3-deoxy-alpha-D-manno-oct-2-ulosonate + CTP = CMP-3-deoxy-beta-D-manno-octulosonate + diphosphate. It functions in the pathway nucleotide-sugar biosynthesis; CMP-3-deoxy-D-manno-octulosonate biosynthesis; CMP-3-deoxy-D-manno-octulosonate from 3-deoxy-D-manno-octulosonate and CTP: step 1/1. The protein operates within bacterial outer membrane biogenesis; lipopolysaccharide biosynthesis. In terms of biological role, activates KDO (a required 8-carbon sugar) for incorporation into bacterial lipopolysaccharide in Gram-negative bacteria. This chain is 3-deoxy-manno-octulosonate cytidylyltransferase 2, found in Actinobacillus pleuropneumoniae serotype 5b (strain L20).